A 476-amino-acid chain; its full sequence is NADH-quinone oxidoreductase subunit N (476 aa).

The next 14 helical transmembrane spans lie at 5 to 25, 38 to 58, 70 to 90, 97 to 117, 122 to 142, 157 to 177, 196 to 218, 231 to 253, 264 to 284, 292 to 312, 318 to 338, 364 to 384, 401 to 421, and 445 to 465; these read LALI…LMLG, LSAL…FGVE, AFGG…ILVA, GMRA…GIMA, LMTL…LASF, FVLG…LYGF, IGLI…AVPF, TPVT…ARIV, WQQI…VGAI, LLAY…AAGT, GVLT…LVVL, LAAA…LFGF, PLAV…IAII, and IVAA…PALA.

Belongs to the complex I subunit 2 family. As to quaternary structure, NDH-1 is composed of 14 different subunits. Subunits NuoA, H, J, K, L, M, N constitute the membrane sector of the complex.

It localises to the cell inner membrane. The catalysed reaction is a quinone + NADH + 5 H(+)(in) = a quinol + NAD(+) + 4 H(+)(out). Its function is as follows. NDH-1 shuttles electrons from NADH, via FMN and iron-sulfur (Fe-S) centers, to quinones in the respiratory chain. The immediate electron acceptor for the enzyme in this species is believed to be ubiquinone. Couples the redox reaction to proton translocation (for every two electrons transferred, four hydrogen ions are translocated across the cytoplasmic membrane), and thus conserves the redox energy in a proton gradient. In Sphingopyxis alaskensis (strain DSM 13593 / LMG 18877 / RB2256) (Sphingomonas alaskensis), this protein is NADH-quinone oxidoreductase subunit N.